The chain runs to 558 residues: Arginine--tRNA ligase (558 aa).

The 'HIGH' region signature appears at 116–126; the sequence is ANPNGPLHVGH.

It belongs to the class-I aminoacyl-tRNA synthetase family.

It is found in the cytoplasm. It carries out the reaction tRNA(Arg) + L-arginine + ATP = L-arginyl-tRNA(Arg) + AMP + diphosphate. The sequence is that of Arginine--tRNA ligase from Methanocorpusculum labreanum (strain ATCC 43576 / DSM 4855 / Z).